The primary structure comprises 504 residues: Probable cytochrome P450 513F1 (504 aa).

Residues 1–21 (MILSLLFLFVITLYFLIPSRI) form a helical membrane-spanning segment. Cys-449 lines the heme pocket.

Belongs to the cytochrome P450 family. It depends on heme as a cofactor.

The protein localises to the membrane. This chain is Probable cytochrome P450 513F1 (cyp513F1), found in Dictyostelium discoideum (Social amoeba).